A 316-amino-acid polypeptide reads, in one-letter code: Putative S-adenosyl-L-methionine-dependent methyltransferase MAB_4606c (316 aa).

Residues Asp137 and 166 to 167 each bind S-adenosyl-L-methionine; that span reads DL.

The protein belongs to the UPF0677 family.

Functionally, exhibits S-adenosyl-L-methionine-dependent methyltransferase activity. The sequence is that of Putative S-adenosyl-L-methionine-dependent methyltransferase MAB_4606c from Mycobacteroides abscessus (strain ATCC 19977 / DSM 44196 / CCUG 20993 / CIP 104536 / JCM 13569 / NCTC 13031 / TMC 1543 / L948) (Mycobacterium abscessus).